A 404-amino-acid chain; its full sequence is Argininosuccinate synthase (404 aa).

Residues 13–21 (AYSGGLDTS) and A41 contribute to the ATP site. L-citrulline is bound by residues Y93 and S98. Residue G123 participates in ATP binding. The L-aspartate site is built by T125, N129, and D130. N129 contributes to the L-citrulline binding site. L-citrulline contacts are provided by R133, S182, S191, E267, and Y279.

Belongs to the argininosuccinate synthase family. Type 1 subfamily. As to quaternary structure, homotetramer.

The protein localises to the cytoplasm. The enzyme catalyses L-citrulline + L-aspartate + ATP = 2-(N(omega)-L-arginino)succinate + AMP + diphosphate + H(+). It functions in the pathway amino-acid biosynthesis; L-arginine biosynthesis; L-arginine from L-ornithine and carbamoyl phosphate: step 2/3. The chain is Argininosuccinate synthase from Moritella profunda.